We begin with the raw amino-acid sequence, 100 residues long: NADH-quinone oxidoreductase subunit K (100 aa).

A run of 3 helical transmembrane segments spans residues 1–21, 28–48, and 64–84; these read MIGL…GLAG, ILLL…GFVA, and FIIS…ILWF.

Belongs to the complex I subunit 4L family. NDH-1 is composed of 14 different subunits. Subunits NuoA, H, J, K, L, M, N constitute the membrane sector of the complex.

Its subcellular location is the cell inner membrane. It carries out the reaction a quinone + NADH + 5 H(+)(in) = a quinol + NAD(+) + 4 H(+)(out). In terms of biological role, NDH-1 shuttles electrons from NADH, via FMN and iron-sulfur (Fe-S) centers, to quinones in the respiratory chain. The immediate electron acceptor for the enzyme in this species is believed to be ubiquinone. Couples the redox reaction to proton translocation (for every two electrons transferred, four hydrogen ions are translocated across the cytoplasmic membrane), and thus conserves the redox energy in a proton gradient. This Helicobacter pylori (strain ATCC 700392 / 26695) (Campylobacter pylori) protein is NADH-quinone oxidoreductase subunit K.